The following is a 407-amino-acid chain: O-antigen polymerase (407 aa).

Helical transmembrane passes span Leu2 to Val22, Val31 to Val51, Tyr63 to Tyr83, Tyr101 to Met121, Tyr141 to Phe161, Leu168 to Gly185, Ile190 to Ile204, Phe211 to Tyr231, Ala319 to Leu339, Phe356 to Phe376, and Ile382 to Leu402.

The protein resides in the cell inner membrane. It carries out the reaction n lipid-linked O-antigen repeat units = a lipid-linked O antigen + (n-1) polyisoprenyl diphosphate.. The protein operates within bacterial outer membrane biogenesis; LPS O-antigen biosynthesis. Its function is as follows. Polymerase involved in the biosynthesis of the lipopolysaccharide (LPS). Catalyzes the polymerization of the O-antigen repeat units on the periplasmic face of the inner membrane, leading to the formation of the lipid-linked O-antigen molecule. The protein is O-antigen polymerase (rfc) of Salmonella typhi.